The sequence spans 637 residues: MPNRKYADGEVVMGRWPGSVLYYEVQVTSYDDASHLYTVKYKDGTELALKESDIRLQSSFKQRKSQSSSSSPSRRSRSRSRSRSPGRPAKGRRRSSSHSREHKEDKKKIIQETSLAPPKPSENNTRRYNGEPDSTERNDTSSKLLEQQKLKPDVEMERVLDQYSLRSRREEKKKEEIYAEKKIFEAIKTPEKPSSKTKELEFGGRFGTFMLMFFLPATVLYLVLMCKQDDPSLMNFPPLPALESLWETKVFGVFLLWFFFQALFYLLPIGKVVEGLPLSNPRKLQYRINGFYAFLLTAAAIGTLLYFQFELHYLYDHFVQFAVSAAAFSMALSIYLYIRSLKAPEEDLAPGGNSGYLVYDFFTGHELNPRIGSFDLKYFCELRPGLIGWVVINLAMLLAEMKIHNQSMPSLSMILVNSFQLLYVVDALWNEEAVLTTMDITHDGFGFMLAFGDLVWVPFVYSLQAFYLVGHPIAISWPVAAAITILNCIGYYIFRSANSQKNNFRRNPADPKLSYLKVIPTATGKGLLVTGWWGFVRHPNYLGDIIMALAWSLPCGFNHILPYFYVIYFICLLVHREARDEHHCKKKYGLAWERYCQRVPYTHISLHLLEHSTYLICKLKYTSHLCTWSVCYLGFKH.

The Tudor domain occupies 1-62; the sequence is MPNRKYADGE…DIRLQSSFKQ (62 aa). At 1-205 the chain is on the nuclear side; it reads MPNRKYADGE…KTKELEFGGR (205 aa). Low complexity predominate over residues 57–73; that stretch reads QSSFKQRKSQSSSSSPS. Positions 57 to 151 are disordered; sequence QSSFKQRKSQ…SKLLEQQKLK (95 aa). Residues 74-97 show a composition bias toward basic residues; that stretch reads RRSRSRSRSRSPGRPAKGRRRSSS. A phosphoserine; by PKA mark is found at Ser-95 and Ser-96. Basic and acidic residues-rich tracts occupy residues 98 to 110 and 124 to 151; these read HSRE…KKII and NTRR…QKLK. Transmembrane regions (helical) follow at residues 206 to 226, 250 to 270, 288 to 309, 317 to 338, 378 to 399, 403 to 425, 466 to 486, and 554 to 574; these read FGTF…VLMC, VFGV…LPIG, INGF…YFQF, HFVQ…YLYI, YFCE…MLLA, IHNQ…LYVV, FYLV…ITIL, and PCGF…CLLV.

The protein belongs to the ERG4/ERG24 family. As to quaternary structure, interacts with DNA. Interaction with DNA is sequence independent with higher affinity for supercoiled and relaxed circular DNA than linear DNA.

Its subcellular location is the nucleus inner membrane. The protein localises to the nucleus. It localises to the cytoplasm. It is found in the endoplasmic reticulum membrane. It catalyses the reaction 5alpha-cholest-8,14-dien-3beta-ol + NADPH + H(+) = 5alpha-cholest-8-en-3beta-ol + NADP(+). The enzyme catalyses 4,4-dimethyl-5alpha-cholesta-8,24-dien-3beta-ol + NADP(+) = 4,4-dimethyl-5alpha-cholesta-8,14,24-trien-3beta-ol + NADPH + H(+). The catalysed reaction is 4,4-dimethyl-8,14-cholestadien-3beta-ol + NADPH + H(+) = 4,4-dimethyl-5alpha-cholest-8-en-3beta-ol + NADP(+). Its pathway is steroid biosynthesis; cholesterol biosynthesis. In terms of biological role, catalyzes the reduction of the C14-unsaturated bond of lanosterol, as part of the metabolic pathway leading to cholesterol biosynthesis. Anchors the lamina and the heterochromatin to the inner nuclear membrane. This chain is Delta(14)-sterol reductase LBR (LBR), found in Gallus gallus (Chicken).